Reading from the N-terminus, the 401-residue chain is Eukaryotic translation initiation factor 3 subunit M (401 aa).

Positions 188-356 (QRMLSHQFLV…RIVNVNSSTQ (169 aa)) constitute a PCI domain.

It belongs to the eIF-3 subunit M family. As to quaternary structure, component of the eukaryotic translation initiation factor 3 (eIF-3) complex.

It localises to the cytoplasm. Its function is as follows. Component of the eukaryotic translation initiation factor 3 (eIF-3) complex, which is involved in protein synthesis of a specialized repertoire of mRNAs and, together with other initiation factors, stimulates binding of mRNA and methionyl-tRNAi to the 40S ribosome. The eIF-3 complex specifically targets and initiates translation of a subset of mRNAs involved in cell proliferation. This Dictyostelium discoideum (Social amoeba) protein is Eukaryotic translation initiation factor 3 subunit M (eif3m).